Consider the following 77-residue polypeptide: MIRTQVQLPDELYRDAKRVAHEHEMTLAEVVRRGLEHMVRIYPRRDAASDTWQPPTPRRLGPFRASEETWRELANEA.

In terms of biological role, possibly the antitoxin component of a type II toxin-antitoxin (TA) system. Its cognate toxin is VapC24 (Potential). The chain is Putative antitoxin VapB24 (vapB24) from Mycobacterium tuberculosis (strain CDC 1551 / Oshkosh).